The following is a 656-amino-acid chain: Chaperone protein HtpG (656 aa).

Residues 1-364 (MSEQNPTDSK…SADLPLNVSR (364 aa)) are a; substrate-binding. The tract at residues 365–583 (EILQESRDVK…EGELSPQMIQ (219 aa)) is b. A c region spans residues 584-656 (MLKQMGQDVP…LRRVNELLMK (73 aa)).

The protein belongs to the heat shock protein 90 family. In terms of assembly, homodimer.

It is found in the cytoplasm. Its function is as follows. Molecular chaperone. Has ATPase activity. The protein is Chaperone protein HtpG of Psychrobacter arcticus (strain DSM 17307 / VKM B-2377 / 273-4).